Reading from the N-terminus, the 282-residue chain is Hydroxyacylglutathione hydrolase-like protein (282 aa).

Residues H54, H56, D58, H59, H110, D134, and H173 each coordinate Zn(2+).

The protein belongs to the metallo-beta-lactamase superfamily. Glyoxalase II family. The cofactor is Zn(2+).

Functionally, hydrolase acting on ester bonds. The chain is Hydroxyacylglutathione hydrolase-like protein (HAGHL) from Gallus gallus (Chicken).